A 160-amino-acid polypeptide reads, in one-letter code: Cyanate hydratase (160 aa).

Active-site residues include arginine 100, glutamate 103, and serine 126.

The protein belongs to the cyanase family.

It carries out the reaction cyanate + hydrogencarbonate + 3 H(+) = NH4(+) + 2 CO2. In terms of biological role, catalyzes the reaction of cyanate with bicarbonate to produce ammonia and carbon dioxide. The chain is Cyanate hydratase from Aspergillus oryzae (strain ATCC 42149 / RIB 40) (Yellow koji mold).